The following is a 305-amino-acid chain: Protoheme IX farnesyltransferase (305 aa).

The next 9 membrane-spanning stretches (helical) occupy residues 29–49 (VTQL…PGMV), 51–71 (WSVL…AFAI), 101–121 (TLIF…VFAN), 123–143 (LTMW…TILL), 151–171 (IVIG…AVSG), 177–197 (AWFL…ALAL), 221–241 (LLHI…PFVY), 244–264 (SGYI…GYAW), and 283–303 (ILYL…KFVP).

The protein belongs to the UbiA prenyltransferase family. Protoheme IX farnesyltransferase subfamily.

Its subcellular location is the cell inner membrane. It carries out the reaction heme b + (2E,6E)-farnesyl diphosphate + H2O = Fe(II)-heme o + diphosphate. The protein operates within porphyrin-containing compound metabolism; heme O biosynthesis; heme O from protoheme: step 1/1. In terms of biological role, converts heme B (protoheme IX) to heme O by substitution of the vinyl group on carbon 2 of heme B porphyrin ring with a hydroxyethyl farnesyl side group. The protein is Protoheme IX farnesyltransferase of Cupriavidus metallidurans (strain ATCC 43123 / DSM 2839 / NBRC 102507 / CH34) (Ralstonia metallidurans).